The following is a 116-amino-acid chain: Ribosome-binding factor A (116 aa).

Belongs to the RbfA family. In terms of assembly, monomer. Binds 30S ribosomal subunits, but not 50S ribosomal subunits or 70S ribosomes.

Its subcellular location is the cytoplasm. In terms of biological role, one of several proteins that assist in the late maturation steps of the functional core of the 30S ribosomal subunit. Associates with free 30S ribosomal subunits (but not with 30S subunits that are part of 70S ribosomes or polysomes). Required for efficient processing of 16S rRNA. May interact with the 5'-terminal helix region of 16S rRNA. This is Ribosome-binding factor A from Staphylococcus aureus (strain JH9).